The primary structure comprises 492 residues: 3,6-anhydro-alpha-L-galactose dehydrogenase (492 aa).

NADP(+) contacts are provided by residues 160 to 161 (WN), 184 to 187 (KPSE), and 237 to 238 (GS). Glu259 functions as the Proton acceptor in the catalytic mechanism. Leu260 contributes to the NADP(+) binding site. Cys293 (nucleophile) is an active-site residue. Residue Glu394 coordinates NADP(+).

The protein belongs to the aldehyde dehydrogenase family.

It carries out the reaction 3,6-anhydro-alpha-L-galactopyranose + NADP(+) + H2O = 3,6-anhydro-L-galactonate + NADPH + 2 H(+). With respect to regulation, significantly inhibited by EDTA. Activity is enhanced by Fe(2+), but is strongly inhibited by Mn(2+), Cu(2+), Zn(2+), Ni(2+) and Co(2+). Functionally, involved in the degradation of 3,6-anhydro-L-galactose, which is the major monomeric sugar of red macroalgae. Catalyzes the oxidation of 3,6-anhydro-L-galactose (AHG) to form 3,6-anhydrogalactonate (AHGA). Shows broad substrate specificity, with maximum activity toward AHG. The enzyme activities toward D-fructose, D-galactose and D-ribose are between 40% and 50% of the maximum, but those toward L-rhamnose, L-glyceraldehyde, D-glyceraldehyde, L-fucose and D-glucose are much lower. The protein is 3,6-anhydro-alpha-L-galactose dehydrogenase of Streptomyces coelicolor (strain ATCC BAA-471 / A3(2) / M145).